A 765-amino-acid polypeptide reads, in one-letter code: 5-methyltetrahydropteroyltriglutamate--homocysteine methyltransferase 1 (765 aa).

Lys18 and Asn116 together coordinate 5-methyltetrahydropteroyltri-L-glutamate. An L-homocysteine-binding site is contributed by 437 to 439 (IGS). L-methionine-binding positions include 437 to 439 (IGS) and Glu490. 5-methyltetrahydropteroyltri-L-glutamate-binding positions include 521–522 (RC) and Trp567. Asp605 lines the L-homocysteine pocket. Asp605 contributes to the L-methionine binding site. The Zn(2+) site is built by His647, Cys649, His658, Asp662, and Glu671. His701 functions as the Proton donor in the catalytic mechanism. Zn(2+) is bound at residue Cys733.

It belongs to the vitamin-B12 independent methionine synthase family. Zn(2+) is required as a cofactor. In terms of tissue distribution, expressed in leaves, stems, flowers, siliques and seeds.

It is found in the cytoplasm. The protein localises to the cytosol. It catalyses the reaction 5-methyltetrahydropteroyltri-L-glutamate + L-homocysteine = tetrahydropteroyltri-L-glutamate + L-methionine. Its pathway is amino-acid biosynthesis; L-methionine biosynthesis via de novo pathway; L-methionine from L-homocysteine (MetE route): step 1/1. Functionally, catalyzes the transfer of a methyl group from 5-methyltetrahydrofolate to homocysteine resulting in methionine formation. This Arabidopsis thaliana (Mouse-ear cress) protein is 5-methyltetrahydropteroyltriglutamate--homocysteine methyltransferase 1 (MS1).